We begin with the raw amino-acid sequence, 279 residues long: Dermonecrotic toxin LrSicTox-alphaIA1i (279 aa).

H11 is an active-site residue. Residues E31 and D33 each contribute to the Mg(2+) site. H47 (nucleophile) is an active-site residue. Disulfide bonds link C51-C57 and C53-C196. D91 lines the Mg(2+) pocket. N-linked (GlcNAc...) asparagine glycosylation occurs at N256.

This sequence belongs to the arthropod phospholipase D family. Class II subfamily. Requires Mg(2+) as cofactor. Expressed by the venom gland.

The protein localises to the secreted. It carries out the reaction an N-(acyl)-sphingosylphosphocholine = an N-(acyl)-sphingosyl-1,3-cyclic phosphate + choline. The catalysed reaction is an N-(acyl)-sphingosylphosphoethanolamine = an N-(acyl)-sphingosyl-1,3-cyclic phosphate + ethanolamine. It catalyses the reaction a 1-acyl-sn-glycero-3-phosphocholine = a 1-acyl-sn-glycero-2,3-cyclic phosphate + choline. The enzyme catalyses a 1-acyl-sn-glycero-3-phosphoethanolamine = a 1-acyl-sn-glycero-2,3-cyclic phosphate + ethanolamine. Its activity is regulated as follows. Inhibited with low affinity by edelfosine. Functionally, dermonecrotic toxins cleave the phosphodiester linkage between the phosphate and headgroup of certain phospholipids (sphingolipid and lysolipid substrates), forming an alcohol (often choline) and a cyclic phosphate. This toxin acts on sphingomyelin (SM). It also acts on a broad range of lysophospholipids, like lysophosphatidylinositol (LPI), lysophosphatidylglycerol (LPG), lysophosphatidylethanolamine (LPE), lysobisphosphatidic acid (LBPA), lysophosphatidylserine (LPS) and lysophosphatidylcholines (LPC) of varying chain lengths. The substrate preference is LPI &gt; LPG &gt; LPS &gt; LPC &gt;&gt; LPE, LBPA. Furthermore, the enzyme also act on cyclic phosphatidic acid and lyso-platelet activating factor (LPAF, an alkyl-LPC). The enzyme does not act on sphingosylphosphorylcholine (SPC, also known as lyso-sphingomyelin) and PAF. The toxin may also act on ceramide phosphoethanolamine (CPE). It acts by transphosphatidylation, releasing exclusively cyclic phosphate products as second products. It does not exhibit detectable PLA1/2 activity. It induces dose-dependent hemolysis and dermonecrosis. Also induces increased vascular permeability, edema, inflammatory response, and platelet aggregation. This chain is Dermonecrotic toxin LrSicTox-alphaIA1i, found in Loxosceles reclusa (Brown recluse spider).